Consider the following 147-residue polypeptide: UPF0306 protein YhbP (147 aa).

This sequence belongs to the UPF0306 family.

The chain is UPF0306 protein YhbP from Escherichia coli (strain SMS-3-5 / SECEC).